We begin with the raw amino-acid sequence, 1835 residues long: Urea amidolyase (1835 aa).

ATP is bound by residues 122–129 (GAIIVGKT) and lysine 747. Residues 632-1075 (LFDTVLIANR…STNILNSYQY (444 aa)) form the Biotin carboxylation domain. The ATP-grasp domain occupies 751-948 (RQIAQKAGVP…LVEWMIRIAA (198 aa)). Serine 803 is modified (phosphoserine). Residues glutamate 830 and asparagine 865 each coordinate ATP. Residues 1754 to 1832 (DEEEDFPEGA…DSGDIVAVIE (79 aa)) enclose the Biotinyl-binding domain. Lysine 1798 bears the N6-biotinyllysine mark.

Monomer. Requires biotin as cofactor.

It carries out the reaction urea + hydrogencarbonate + ATP = urea-1-carboxylate + ADP + phosphate + H(+). The enzyme catalyses urea-1-carboxylate + H2O + 3 H(+) = 2 NH4(+) + 2 CO2. It functions in the pathway nitrogen metabolism; urea degradation; CO(2) and NH(3) from urea (allophanate route): step 1/2. Its pathway is nitrogen metabolism; urea degradation; CO(2) and NH(3) from urea (allophanate route): step 2/2. Hydrolysis of urea to ammonia and CO(2). This Saccharomyces cerevisiae (strain ATCC 204508 / S288c) (Baker's yeast) protein is Urea amidolyase (DUR1,2).